An 83-amino-acid chain; its full sequence is Erabutoxin c (83 aa).

A signal peptide spans 1 to 21; the sequence is MKTLLLTLVVVTIVCLDLGYT. Residues 24–38 form a loop I region; that stretch reads CFNHQSSQPQTTKTC. Cystine bridges form between C24–C45, C38–C62, C64–C75, and C76–C81. Positions 39 to 44 are stretch between loop I and loop II; that stretch reads SPGESS. The interval 45 to 62 is loop II; sequence CYHKQWSDFRGTIIERGC. A loop III region spans residues 64–75; the sequence is CPTVKPGINLSC.

The protein belongs to the three-finger toxin family. Short-chain subfamily. Type I alpha-neurotoxin sub-subfamily. As to expression, expressed by the venom gland.

The protein localises to the secreted. In terms of biological role, binds to muscle nicotinic acetylcholine receptor (nAChR) and inhibit acetylcholine from binding to the receptor, thereby impairing neuromuscular transmission. Binds to Torpedo marmorata nAChR (Kd=0.14 nM). In Laticauda semifasciata (Black-banded sea krait), this protein is Erabutoxin c.